The sequence spans 561 residues: Putative transport protein YbjL (561 aa).

The next 5 helical transmembrane spans lie at 8 to 28 (LLNG…LCLG), 32 to 52 (LGSI…LLGQ), 66 to 86 (FMLF…SIFF), 94 to 114 (MLAL…GKLF), and 158 to 178 (NLSL…IVGA). RCK C-terminal domains are found at residues 200–288 (RGLD…SFRN) and 292–373 (VFDR…RIGF). 5 helical membrane-spanning segments follow: residues 383 to 403 (LLAF…TFQF), 406 to 426 (FSFG…LGFM), 451 to 471 (VFMA…LGAI), 475 to 495 (MLIA…LFGA), and 540 to 560 (AIAN…WPGL).

Belongs to the AAE transporter (TC 2.A.81) family. YbjL subfamily.

Its subcellular location is the cell membrane. This Escherichia coli O139:H28 (strain E24377A / ETEC) protein is Putative transport protein YbjL.